The chain runs to 300 residues: Regulatory protein NocR (300 aa).

An HTH lysR-type domain is found at Met1 to Thr59. Positions Met19–Arg38 form a DNA-binding region, H-T-H motif.

The protein belongs to the LysR transcriptional regulatory family.

Functionally, positive regulatory protein for the noc operon involved in nopaline catabolism and uptake. The sequence is that of Regulatory protein NocR (nocR) from Agrobacterium fabrum (strain C58 / ATCC 33970) (Agrobacterium tumefaciens (strain C58)).